We begin with the raw amino-acid sequence, 284 residues long: Bifunctional protein FolD (284 aa).

NADP(+)-binding positions include 166–168 (GAS) and Ile-232.

The protein belongs to the tetrahydrofolate dehydrogenase/cyclohydrolase family. In terms of assembly, homodimer.

The catalysed reaction is (6R)-5,10-methylene-5,6,7,8-tetrahydrofolate + NADP(+) = (6R)-5,10-methenyltetrahydrofolate + NADPH. It carries out the reaction (6R)-5,10-methenyltetrahydrofolate + H2O = (6R)-10-formyltetrahydrofolate + H(+). It functions in the pathway one-carbon metabolism; tetrahydrofolate interconversion. In terms of biological role, catalyzes the oxidation of 5,10-methylenetetrahydrofolate to 5,10-methenyltetrahydrofolate and then the hydrolysis of 5,10-methenyltetrahydrofolate to 10-formyltetrahydrofolate. The chain is Bifunctional protein FolD from Shewanella baltica (strain OS223).